The primary structure comprises 362 residues: Abnormal cell migration protein 13 (362 aa).

Residues 1-20 (MTKLLIALILFSICWKPYSA) form the signal peptide. Over 21-237 (EPIASFFDGL…ELDPLTTVSG (217 aa)) the chain is Extracellular. Disulfide bonds link cysteine 36-cysteine 68 and cysteine 98-cysteine 136. Positions 36–175 (CKARLDRRLT…KGFKLHWGSF (140 aa)) constitute a CUB domain. An N-linked (GlcNAc...) asparagine glycan is attached at asparagine 63. Residues asparagine 145 and asparagine 161 are each glycosylated (N-linked (GlcNAc...) asparagine). The 44-residue stretch at 182 to 225 (NCVTGEFSCGNGECIPIESACDRFADCSNGEDLIHSRQMAANCQ) folds into the LDL-receptor class A domain. 3 cysteine pairs are disulfide-bonded: cysteine 183–cysteine 195, cysteine 190–cysteine 208, and cysteine 202–cysteine 224. Residues 238-258 (VFVLLFSATIILSLCGFIMFV) traverse the membrane as a helical segment. Over 259–362 (CCLCKCLKST…VRNDVHRNLL (104 aa)) the chain is Cytoplasmic. The tract at residues 275–311 (SSHTTTTTATDYKPDPPQFYPPSPPKMPPPSAASSYT) is disordered. The segment covering 289-305 (DPPQFYPPSPPKMPPPS) has biased composition (pro residues).

As to quaternary structure, interacts with abl-1 (via SH2 and SH3 domains); the interaction is direct. Interacts with sem-5; the interaction is direct. Expressed in pharyngeal-intestinal valve cells and ventral cord neurons.

Its subcellular location is the cell membrane. It localises to the perikaryon. It is found in the cell projection. The protein resides in the axon. The protein localises to the dendrite. Probable receptor that acts as an upstream signaling protein to promote the guidance, migration and positioning of the right Q neuroblast (QR) and its descendants along the anteroposterior body axis, and also the anterior migration of BDU interneurons during larval development. Associates with and recruits the downstream components tyrosine kinase abl-1 and the tyrosine kinase adapter protein sem-5 to the leading edge of migrating Q neuroblasts and their descendants to activate signaling through the two parallel wve-1 and wsp-1 pathways, respectively, and direct migration along the anteroposterior body axis. Involved in cytoskeleton dynamics regulating the organization of the actin cytoskeleton at the leading edge of migrating cells to ensure correct Q cell polarity and promote migration. Role in cytoskeleton organization may be by activation of the wve-1 and wsp-1 pathways which recruit the Arp2/3 complex to the leading edge of migrating cells. Plays a role in regulating the asymmetric distribution of the actin cytoskeleton-binding protein cor-1 in Q neuroblasts which is required for the anterior migration of QR neuroblasts. In Caenorhabditis elegans, this protein is Abnormal cell migration protein 13.